We begin with the raw amino-acid sequence, 319 residues long: Thiamine-monophosphate kinase (319 aa).

Mg(2+) is bound by residues Asp28, Thr43, Thr44, and Asp45. His52 contacts substrate. A Mg(2+)-binding site is contributed by Asp73. ATP-binding positions include Tyr104, 121–122 (GD), and Arg145. A Mg(2+)-binding site is contributed by Asp122. Residue Asp218 participates in Mg(2+) binding. Ser220 provides a ligand contact to ATP. Asp221 contacts Mg(2+). 2 residues coordinate substrate: Glu268 and Tyr315.

It belongs to the thiamine-monophosphate kinase family.

It carries out the reaction thiamine phosphate + ATP = thiamine diphosphate + ADP. The protein operates within cofactor biosynthesis; thiamine diphosphate biosynthesis; thiamine diphosphate from thiamine phosphate: step 1/1. Functionally, catalyzes the ATP-dependent phosphorylation of thiamine-monophosphate (TMP) to form thiamine-pyrophosphate (TPP), the active form of vitamin B1. In Methanocaldococcus jannaschii (strain ATCC 43067 / DSM 2661 / JAL-1 / JCM 10045 / NBRC 100440) (Methanococcus jannaschii), this protein is Thiamine-monophosphate kinase.